A 415-amino-acid chain; its full sequence is MRADLLIYNISKIYTPIGTKPLCGEDMEKIEEIENAYIAIKDGKILAAGKSPAAISAEREIDAKGMIALPGFVDPHTHVMHYGSRENEMALKLKGYSYIDILKQGGGIHSTVRATREASDEALLQKALKSLEIMLSHGVTTVEVKSGYGLNTEQEIRLLRLMNQLKSLSVVDIVPTFLGAHAIPQEFEENPWRYVEKVINEMLPKVKEEDLAEFCDVFCEEGAFDYEQSKKILEEAKKLGFRLKIHADELTHSKGGELAGILGAISADHLEEVSDEGIDLMKKAGTVAVLLPGVSFFLNRPYADARRLIERGLPVALGTDYNPGTSPTENLQLIMSFAYINMKMRAEEILTAVTLNAACAIDRGDEIGTIEEGKRADIVLVDAPNLDYMMYHFGINHVNTVIKAKGNDVVVIGIK.

Positions 76 and 78 each coordinate Fe(3+). 2 residues coordinate Zn(2+): His-76 and His-78. 4-imidazolone-5-propanoate-binding residues include Arg-85, Tyr-148, and His-181. An N-formimidoyl-L-glutamate-binding site is contributed by Tyr-148. His-246 lines the Fe(3+) pocket. Residue His-246 participates in Zn(2+) binding. Residue Glu-249 coordinates 4-imidazolone-5-propanoate. Asp-320 is a binding site for Fe(3+). Asp-320 is a Zn(2+) binding site. The N-formimidoyl-L-glutamate site is built by Asn-322 and Gly-324. Thr-325 is a 4-imidazolone-5-propanoate binding site.

The protein belongs to the metallo-dependent hydrolases superfamily. HutI family. The cofactor is Zn(2+). Fe(3+) serves as cofactor.

It localises to the cytoplasm. It catalyses the reaction 4-imidazolone-5-propanoate + H2O = N-formimidoyl-L-glutamate. It participates in amino-acid degradation; L-histidine degradation into L-glutamate; N-formimidoyl-L-glutamate from L-histidine: step 3/3. Catalyzes the hydrolytic cleavage of the carbon-nitrogen bond in imidazolone-5-propanoate to yield N-formimidoyl-L-glutamate. It is the third step in the universal histidine degradation pathway. The polypeptide is Imidazolonepropionase (Caldanaerobacter subterraneus subsp. tengcongensis (strain DSM 15242 / JCM 11007 / NBRC 100824 / MB4) (Thermoanaerobacter tengcongensis)).